Reading from the N-terminus, the 391-residue chain is Imidazolonepropionase (391 aa).

Residues His72 and His74 each contribute to the Fe(3+) site. Positions 72 and 74 each coordinate Zn(2+). 4-imidazolone-5-propanoate contacts are provided by Arg81, Tyr139, and His166. Tyr139 lines the N-formimidoyl-L-glutamate pocket. His229 contributes to the Fe(3+) binding site. His229 provides a ligand contact to Zn(2+). Gln232 contributes to the 4-imidazolone-5-propanoate binding site. Asp303 is a Fe(3+) binding site. Asp303 contacts Zn(2+). N-formimidoyl-L-glutamate contacts are provided by Asn305 and Gly307. Ser308 serves as a coordination point for 4-imidazolone-5-propanoate.

Belongs to the metallo-dependent hydrolases superfamily. HutI family. Zn(2+) serves as cofactor. It depends on Fe(3+) as a cofactor.

The protein resides in the cytoplasm. It catalyses the reaction 4-imidazolone-5-propanoate + H2O = N-formimidoyl-L-glutamate. It functions in the pathway amino-acid degradation; L-histidine degradation into L-glutamate; N-formimidoyl-L-glutamate from L-histidine: step 3/3. Its function is as follows. Catalyzes the hydrolytic cleavage of the carbon-nitrogen bond in imidazolone-5-propanoate to yield N-formimidoyl-L-glutamate. It is the third step in the universal histidine degradation pathway. This is Imidazolonepropionase from Streptomyces coelicolor (strain ATCC BAA-471 / A3(2) / M145).